The primary structure comprises 223 residues: MKTIQIAIDGPASSGKSTVAKIIAKDFGFTYLDTGAMYRAVTYMALKNQLGVEEVEALLALLDQHPISFGRSETGDQLVFVGDVDITHPIRENEVTNHVSAIAAIPQVREKLVSLQQEIAQQGGIVMDGRDIGTVVLPQAELKIFLVASVDERAERRYKENIAKGIETDLETLKKEIAARDYKDSHRETSPLKQAEDAVYLDTTGLNIQEVVEKIKAEAEKRM.

Position 10–18 (10–18) interacts with ATP; it reads GPASSGKST.

The protein belongs to the cytidylate kinase family. Type 1 subfamily.

Its subcellular location is the cytoplasm. It carries out the reaction CMP + ATP = CDP + ADP. The catalysed reaction is dCMP + ATP = dCDP + ADP. In Streptococcus pneumoniae (strain 70585), this protein is Cytidylate kinase.